Reading from the N-terminus, the 355-residue chain is Elongation factor Ts (355 aa).

The interval 82-85 (TDFV) is involved in Mg(2+) ion dislocation from EF-Tu.

This sequence belongs to the EF-Ts family.

Its subcellular location is the cytoplasm. Its function is as follows. Associates with the EF-Tu.GDP complex and induces the exchange of GDP to GTP. It remains bound to the aminoacyl-tRNA.EF-Tu.GTP complex up to the GTP hydrolysis stage on the ribosome. The chain is Elongation factor Ts from Helicobacter pylori (strain HPAG1).